The primary structure comprises 232 residues: Adenosylcobinamide-GDP ribazoletransferase (232 aa).

6 helical membrane-spanning segments follow: residues 32–52 (PIYF…GGSF), 54–74 (NFLL…LFHF), 102–122 (VGPF…TLYL), 126–146 (PITF…LMFF), 172–192 (FFLL…VVTV), and 212–232 (DVLG…LGVV).

It belongs to the CobS family. Requires Mg(2+) as cofactor.

The protein localises to the cell inner membrane. The enzyme catalyses alpha-ribazole + adenosylcob(III)inamide-GDP = adenosylcob(III)alamin + GMP + H(+). The catalysed reaction is alpha-ribazole 5'-phosphate + adenosylcob(III)inamide-GDP = adenosylcob(III)alamin 5'-phosphate + GMP + H(+). The protein operates within cofactor biosynthesis; adenosylcobalamin biosynthesis; adenosylcobalamin from cob(II)yrinate a,c-diamide: step 7/7. In terms of biological role, joins adenosylcobinamide-GDP and alpha-ribazole to generate adenosylcobalamin (Ado-cobalamin). Also synthesizes adenosylcobalamin 5'-phosphate from adenosylcobinamide-GDP and alpha-ribazole 5'-phosphate. This Thermosipho melanesiensis (strain DSM 12029 / CIP 104789 / BI429) protein is Adenosylcobinamide-GDP ribazoletransferase.